A 625-amino-acid polypeptide reads, in one-letter code: Branchpoint-bridging protein (625 aa).

Polar residues predominate over residues 1-16 (MSWRSNAQRTGMNAQP). Disordered stretches follow at residues 1–154 (MSWR…AIGA) and 177–206 (LRSG…RTNT). Gly residues predominate over residues 22–31 (RWGGAGGAGE). 3 stretches are compositionally biased toward low complexity: residues 32-61 (GPSS…SQPY), 70-91 (SSSS…AVAA), and 110-130 (SYAA…GADA). The segment covering 177–190 (LRSGDFVPPDRERS) has biased composition (basic and acidic residues). Residues 253-330 (YLPIKEFPEI…ASVKKCIKLI (78 aa)) enclose the KH domain. CCHC-type zinc fingers lie at residues 368–385 (QLCK…ECPE) and 393–410 (IICH…DCTQ). The interval 466–533 (GPDGKKIPPW…HAYHQQQQAY (68 aa)) is disordered. The span at 488–503 (APRGGDAGRGGWGHRG) shows a compositional bias: gly residues. Residues 516-533 (QHQQQQHPHAYHQQQQAY) are compositionally biased toward low complexity.

The protein belongs to the BBP/SF1 family.

It localises to the nucleus. Necessary for the splicing of pre-mRNA. Has a role in the recognition of the branch site (5'-UACUAAC-3'), the pyrimidine tract and the 3'-splice site at the 3'-end of introns. The chain is Branchpoint-bridging protein (BBP) from Mycosarcoma maydis (Corn smut fungus).